We begin with the raw amino-acid sequence, 487 residues long: Anthocyanidin 3-O-glucosyltransferase 5 (487 aa).

H22 functions as the Proton acceptor in the catalytic mechanism. An an anthocyanidin-binding site is contributed by H22. The Charge relay role is filled by D119. 6 residues coordinate UDP-alpha-D-glucose: Q354, H369, W372, N373, S374, and E377. An anthocyanidin is bound at residue A392. UDP-alpha-D-glucose is bound by residues E393 and Q394.

It belongs to the UDP-glycosyltransferase family. Faintly expressed in cotyledons.

It catalyses the reaction an anthocyanidin + UDP-alpha-D-glucose + H(+) = an anthocyanidin 3-O-beta-D-glucoside + UDP. Its pathway is pigment biosynthesis; anthocyanin biosynthesis. Its function is as follows. In the presence of other necessary color factors, this glycosylation reaction allows the accumulation of anthocyanin pigments. This is Anthocyanidin 3-O-glucosyltransferase 5 (GT5) from Manihot esculenta (Cassava).